The following is a 372-amino-acid chain: tRNA pseudouridine synthase D (372 aa).

The active-site Nucleophile is the aspartate 85. The TRUD domain maps to 160–330 (GFTNYFGYQR…MQGSRRFMWG (171 aa)).

This sequence belongs to the pseudouridine synthase TruD family.

It catalyses the reaction uridine(13) in tRNA = pseudouridine(13) in tRNA. Its function is as follows. Responsible for synthesis of pseudouridine from uracil-13 in transfer RNAs. This is tRNA pseudouridine synthase D from Campylobacter jejuni (strain RM1221).